The chain runs to 321 residues: Cytochrome c biogenesis protein CcsA (321 aa).

Helical transmembrane passes span isoleucine 9–leucine 29, glycine 44–glycine 64, leucine 68–isoleucine 88, methionine 143–isoleucine 163, valine 226–asparagine 246, threonine 260–histidine 274, and valine 289–isoleucine 309.

This sequence belongs to the CcmF/CycK/Ccl1/NrfE/CcsA family. May interact with Ccs1.

It is found in the plastid. It localises to the chloroplast thylakoid membrane. Its function is as follows. Required during biogenesis of c-type cytochromes (cytochrome c6 and cytochrome f) at the step of heme attachment. The sequence is that of Cytochrome c biogenesis protein CcsA from Oryza sativa subsp. indica (Rice).